An 812-amino-acid polypeptide reads, in one-letter code: DNA gyrase subunit A (812 aa).

The region spanning 31 to 496 is the Topo IIA-type catalytic domain; it reads IPDVRDGLKP…GNTDFNVEDV (466 aa). The O-(5'-phospho-DNA)-tyrosine intermediate role is filled by Y119. Residues 523–529 carry the GyrA-box motif; the sequence is QGRGGKG.

It belongs to the type II topoisomerase GyrA/ParC subunit family. In terms of assembly, heterotetramer, composed of two GyrA and two GyrB chains. In the heterotetramer, GyrA contains the active site tyrosine that forms a transient covalent intermediate with DNA, while GyrB binds cofactors and catalyzes ATP hydrolysis.

Its subcellular location is the cytoplasm. The catalysed reaction is ATP-dependent breakage, passage and rejoining of double-stranded DNA.. Its function is as follows. A type II topoisomerase that negatively supercoils closed circular double-stranded (ds) DNA in an ATP-dependent manner to modulate DNA topology and maintain chromosomes in an underwound state. Negative supercoiling favors strand separation, and DNA replication, transcription, recombination and repair, all of which involve strand separation. Also able to catalyze the interconversion of other topological isomers of dsDNA rings, including catenanes and knotted rings. Type II topoisomerases break and join 2 DNA strands simultaneously in an ATP-dependent manner. The sequence is that of DNA gyrase subunit A from Kosmotoga olearia (strain ATCC BAA-1733 / DSM 21960 / TBF 19.5.1).